The sequence spans 193 residues: Probable oligoribonuclease (193 aa).

Residues 15–177 (IIWIDCEMTG…DDIMESIAEL (163 aa)) form the Exonuclease domain. Y136 is a catalytic residue.

It belongs to the oligoribonuclease family.

Functionally, 3'-to-5' exoribonuclease specific for small oligoribonucleotides. This chain is Probable oligoribonuclease, found in Caenorhabditis elegans.